A 44-amino-acid polypeptide reads, in one-letter code: Large ribosomal subunit protein bL34 (44 aa).

2 stretches are compositionally biased toward basic residues: residues Met1–Met22 and Ile31–Val44. A disordered region spans residues Met1–Val44.

It belongs to the bacterial ribosomal protein bL34 family.

The chain is Large ribosomal subunit protein bL34 from Nostoc punctiforme (strain ATCC 29133 / PCC 73102).